The primary structure comprises 83 residues: Putative beta-neurotoxin RjAa12f (83 aa).

A signal peptide spans 1–18 (MKILIFIIASFMLIGVEC). In terms of domain architecture, LCN-type CS-alpha/beta spans 19-82 (KEGYPMGRDG…VWDSSTNKCG (64 aa)). 4 cysteine pairs are disulfide-bonded: Cys29/Cys81, Cys33/Cys55, Cys40/Cys62, and Cys44/Cys64. Residue Gly83 is a propeptide.

In terms of processing, contains 4 disulfide bonds. Expressed by the venom gland.

Its subcellular location is the secreted. Functionally, beta toxins bind voltage-independently at site-4 of sodium channels (Nav) and shift the voltage of activation toward more negative potentials thereby affecting sodium channel activation and promoting spontaneous and repetitive firing. This toxin is lethal to insects (A.domestica). It is not toxic to mice and does not affect mammal F11 sodium channels. The chain is Putative beta-neurotoxin RjAa12f from Rhopalurus junceus (Caribbean blue scorpion).